A 143-amino-acid polypeptide reads, in one-letter code: Putative pre-16S rRNA nuclease (143 aa).

The protein belongs to the YqgF nuclease family.

The protein localises to the cytoplasm. In terms of biological role, could be a nuclease involved in processing of the 5'-end of pre-16S rRNA. In Mesomycoplasma hyopneumoniae (strain 232) (Mycoplasma hyopneumoniae), this protein is Putative pre-16S rRNA nuclease.